Consider the following 514-residue polypeptide: F-box-like/WD repeat-containing protein TBL1XR1 (514 aa).

Residue Ser2 is modified to N-acetylserine. The LisH domain maps to Ser4–Gln36. Residues Gly41–Ala86 enclose the F-box-like domain. Lys102 is subject to N6-acetyllysine. The segment at Ala114–His139 is disordered. The span at Ala124–Glu135 shows a compositional bias: low complexity. WD repeat units lie at residues Gly167–Pro206, Pro223–Leu262, Gln264–Gln303, Phe306–Thr344, Gly347–Asp386, Ala389–Thr437, Lys440–Ser479, and Arg481–Arg513. Lys277 participates in a covalent cross-link: Glycyl lysine isopeptide (Lys-Gly) (interchain with G-Cter in SUMO2).

It belongs to the WD repeat EBI family. Component of the N-Cor repressor complex, at least composed of NCOR1, NCOR2, HDAC3, TBL1X, TBL1XR1, CORO2A and GPS2. Probable component of some E3 ubiquitin ligase complex. Interacts with histones H2B and H4. Interacts with MECP2; bridges interaction between MECP2 and NCOR1. Interacts with USP44.

The protein resides in the nucleus. Its function is as follows. F-box-like protein involved in the recruitment of the ubiquitin/19S proteasome complex to nuclear receptor-regulated transcription units. Plays an essential role in transcription activation mediated by nuclear receptors. Probably acts as integral component of the N-Cor corepressor complex that mediates the recruitment of the 19S proteasome complex, leading to the subsequent proteasomal degradation of N-Cor complex, thereby allowing cofactor exchange, and transcription activation. The polypeptide is F-box-like/WD repeat-containing protein TBL1XR1 (Tbl1xr1) (Mus musculus (Mouse)).